A 253-amino-acid chain; its full sequence is Ribulose bisphosphate carboxylase large chain (253 aa).

Substrate-binding residues include asparagine 35 and threonine 85. Lysine 87 (proton acceptor) is an active-site residue. Lysine 89 contacts substrate. Residues lysine 113, aspartate 115, and glutamate 116 each coordinate Mg(2+). The residue at position 113 (lysine 113) is an N6-carboxylysine. The active-site Proton acceptor is the histidine 206. Residues arginine 207 and histidine 239 each contribute to the substrate site.

It belongs to the RuBisCO large chain family. Type I subfamily. Heterohexadecamer of 8 large chains and 8 small chains; disulfide-linked. The disulfide link is formed within the large subunit homodimers. It depends on Mg(2+) as a cofactor. In terms of processing, the disulfide bond which can form in the large chain dimeric partners within the hexadecamer appears to be associated with oxidative stress and protein turnover.

It is found in the plastid. The protein resides in the chloroplast. The enzyme catalyses 2 (2R)-3-phosphoglycerate + 2 H(+) = D-ribulose 1,5-bisphosphate + CO2 + H2O. It carries out the reaction D-ribulose 1,5-bisphosphate + O2 = 2-phosphoglycolate + (2R)-3-phosphoglycerate + 2 H(+). Functionally, ruBisCO catalyzes two reactions: the carboxylation of D-ribulose 1,5-bisphosphate, the primary event in carbon dioxide fixation, as well as the oxidative fragmentation of the pentose substrate in the photorespiration process. Both reactions occur simultaneously and in competition at the same active site. The protein is Ribulose bisphosphate carboxylase large chain (rbcL) of Magnolia latahensis (Apocynophyllum latahense).